A 324-amino-acid polypeptide reads, in one-letter code: Carbonic anhydrase 15 (324 aa).

The signal sequence occupies residues 1 to 18; sequence MWALDFLLSFLLIQLAAQ. The Alpha-carbonic anhydrase domain occupies 23-293; the sequence is GTWCYDSQDP…LGGRRISASP (271 aa). Histidine 90 functions as the Proton acceptor in the catalytic mechanism. Positions 122, 124, and 147 each coordinate Zn(2+). Tyrosine 155 is an active-site residue. N-linked (GlcNAc...) asparagine glycans are attached at residues asparagine 184, asparagine 194, and asparagine 203. 231-232 contributes to the substrate binding site; sequence TT. Residues 269–290 form a disordered region; that stretch reads LHPRPLTSNFRPQQPLGGRRIS.

This sequence belongs to the alpha-carbonic anhydrase family. It depends on Zn(2+) as a cofactor.

Its subcellular location is the secreted. The enzyme catalyses hydrogencarbonate + H(+) = CO2 + H2O. With respect to regulation, repressed by coumarins. Functionally, reversible hydration of carbon dioxide. The protein is Carbonic anhydrase 15 (Ca15) of Mus musculus (Mouse).